The chain runs to 373 residues: NAD(P)H-quinone oxidoreductase subunit 1 (373 aa).

Transmembrane regions (helical) follow at residues 29–49 (LWVP…VMVM), 64–84 (IGPN…GIKL), 98–118 (VLFT…YLVV), 129–149 (IAIG…GLLM), 177–197 (LALS…VGIV), 202–222 (GLGI…IFLI), 267–287 (LLAS…VVPV), 309–329 (VLGI…AILL), and 348–368 (FLLP…LAFP).

It belongs to the complex I subunit 1 family. NDH-1 is composed of at least 11 different subunits.

The protein localises to the cellular thylakoid membrane. The enzyme catalyses a plastoquinone + NADH + (n+1) H(+)(in) = a plastoquinol + NAD(+) + n H(+)(out). It carries out the reaction a plastoquinone + NADPH + (n+1) H(+)(in) = a plastoquinol + NADP(+) + n H(+)(out). Its function is as follows. NDH-1 shuttles electrons from an unknown electron donor, via FMN and iron-sulfur (Fe-S) centers, to quinones in the respiratory and/or the photosynthetic chain. The immediate electron acceptor for the enzyme in this species is believed to be plastoquinone. Couples the redox reaction to proton translocation, and thus conserves the redox energy in a proton gradient. The chain is NAD(P)H-quinone oxidoreductase subunit 1 from Synechococcus sp. (strain JA-3-3Ab) (Cyanobacteria bacterium Yellowstone A-Prime).